The sequence spans 191 residues: MKKQLLSALIGVSLLVPMAASAADYVIDTEGAHASITFKVNHLGYSYVVGRFNDFSGDFSYDAAKPTAMTVNVTVNTLSVDSNHAERDKHIRGEDFLNTGKFAKATFASTSVEDKGNGDLVINGNLTLNGVTKPLAIKAHAVGEGQDPWGGYRAGFTGTTTFAMKDFGIKMDLGPASSHVELDLVVEGVRK.

The first 22 residues, 1 to 22, serve as a signal peptide directing secretion; the sequence is MKKQLLSALIGVSLLVPMAASA.

The protein belongs to the UPF0312 family. Type 1 subfamily.

Its subcellular location is the periplasm. In Shewanella sp. (strain W3-18-1), this protein is UPF0312 protein Sputw3181_1309.